A 670-amino-acid polypeptide reads, in one-letter code: MHSNILPVLTSVATLLGLVQGQSQQPYRDWAKAYEAAETLVLPWTLEQQANISVRDGTAPGFVPFEPSDGVRSVQGSGKDYDNPAMRTSSNLDDRTLHELYLWPWIDGVANGLGSVMCVMNRVNGIIGCENDHIMNGILKNETGFRGFIVPDVTAPVDKAAGLLGGLGWNSGYSVSEIMAAVKNGSIPESVMTEHALRIVATQLNLLQPPEEYAFPVETADLNVRDPSSKDFIRRAGSESIVLLKNKNNTLPLRSPMSLGIFGKDAANLATGPTPQSDFSNFAGDTYDGHLITGGGSYSPAPYVVSPLDALTARAADGQGFGYKYILSDNWTVTPSESTGEGFFQTSGVSVSQYARESEHCLVFINAFGKEGSDRRTLADETGDKLVNDVADYCGSTIVIINNAGVRLVDAWIEHENVTVFTDLIPCSNQVHTNMFCFPGCPERRRSRQESGHAIVDVLFGDVNPSAKLVYTIAKSKDDYNGQICECCECDYTEGLYIDYRHFDQAGIEPRFEFGFGLCFKSDGRANIAAYTTFTHSDLTINPSTDITTLQPYATGPITEGGPSDLFEQILTISASISNTGGVAGAEVAQLYLSFPDAAKAPVRQLRGFEKVYLEPGETKFVSFPIQRRDLSIWDEQTSKWKIVGGKYGVVLGRSSRDFTVEETLELLTI.

The first 21 residues, 1–21 (MHSNILPVLTSVATLLGLVQG), serve as a signal peptide directing secretion. An N-linked (GlcNAc...) asparagine glycan is attached at Asn51. The segment at 65 to 87 (FEPSDGVRSVQGSGKDYDNPAMR) is disordered. The N-linked (GlcNAc...) asparagine glycan is linked to Asn141. The active site involves Asp152. Asn184, Asn248, Asn330, and Asn417 each carry an N-linked (GlcNAc...) asparagine glycan.

It belongs to the glycosyl hydrolase 3 family.

Its subcellular location is the secreted. The catalysed reaction is Hydrolysis of terminal, non-reducing beta-D-glucosyl residues with release of beta-D-glucose.. The protein operates within glycan metabolism; cellulose degradation. In terms of biological role, beta-glucosidases are one of a number of cellulolytic enzymes involved in the degradation of cellulosic biomass. Catalyzes the last step releasing glucose from the inhibitory cellobiose. The chain is Probable beta-glucosidase N (bglN) from Emericella nidulans (strain FGSC A4 / ATCC 38163 / CBS 112.46 / NRRL 194 / M139) (Aspergillus nidulans).